The primary structure comprises 864 residues: DNA double-strand break repair Rad50 ATPase (864 aa).

ATP is bound by residues 32 to 38 and glutamine 131; that span reads NGAGKSS. Coiled-coil stretches lie at residues 176 to 319 and 376 to 413; these read RELD…EKAI and DIDK…EKNE. Residues 380–478 form the Zinc-hook domain; the sequence is VNSLEQKVEE…ELNKIEREYR (99 aa). Residues cysteine 426 and cysteine 429 each coordinate Zn(2+). The stretch at 440–697 forms a coiled coil; it reads KIIKEAKSYI…DREKIINAIN (258 aa).

It belongs to the SMC family. RAD50 subfamily. Homodimer. Forms a heterotetramer composed of two Mre11 subunits and two Rad50 subunits. Zn(2+) serves as cofactor.

Part of the Rad50/Mre11 complex, which is involved in the early steps of DNA double-strand break (DSB) repair. The complex may facilitate opening of the processed DNA ends to aid in the recruitment of HerA and NurA. Rad50 controls the balance between DNA end bridging and DNA resection via ATP-dependent structural rearrangements of the Rad50/Mre11 complex. This chain is DNA double-strand break repair Rad50 ATPase, found in Saccharolobus solfataricus (strain ATCC 35092 / DSM 1617 / JCM 11322 / P2) (Sulfolobus solfataricus).